A 213-amino-acid chain; its full sequence is Octanoyltransferase (213 aa).

Positions 32–207 (ENTPDEIWLV…NILALLNNPP (176 aa)) constitute a BPL/LPL catalytic domain. Substrate-binding positions include 71-78 (RGGQVTYH), 138-140 (SLG), and 151-153 (GLA). The active-site Acyl-thioester intermediate is cysteine 169.

The protein belongs to the LipB family.

It localises to the cytoplasm. It catalyses the reaction octanoyl-[ACP] + L-lysyl-[protein] = N(6)-octanoyl-L-lysyl-[protein] + holo-[ACP] + H(+). It participates in protein modification; protein lipoylation via endogenous pathway; protein N(6)-(lipoyl)lysine from octanoyl-[acyl-carrier-protein]: step 1/2. Its function is as follows. Catalyzes the transfer of endogenously produced octanoic acid from octanoyl-acyl-carrier-protein onto the lipoyl domains of lipoate-dependent enzymes. Lipoyl-ACP can also act as a substrate although octanoyl-ACP is likely to be the physiological substrate. This is Octanoyltransferase from Citrobacter koseri (strain ATCC BAA-895 / CDC 4225-83 / SGSC4696).